The following is a 564-amino-acid chain: Apyrase (564 aa).

Positions 1–25 (MAGKPGIQLFVIFLLLSSFAAVVWA) are cleaved as a signal peptide. Residues D48, H50, D99, N131, H234, and H258 each contribute to the a divalent metal cation site. R371 contributes to the AMP binding site. An N-linked (GlcNAc...) asparagine glycan is attached at N391. Residues R406, F425, and D515 each contribute to the AMP site.

The protein belongs to the 5'-nucleotidase family. A divalent metal cation serves as cofactor. In terms of tissue distribution, female salivary gland (at protein level). Low-level expression in male tissues. Not detected in female carcasses without salivary glands.

It is found in the secreted. It carries out the reaction a ribonucleoside 5'-triphosphate + 2 H2O = a ribonucleoside 5'-phosphate + 2 phosphate + 2 H(+). Its function is as follows. Facilitates hematophagy by inhibiting ADP-dependent platelet aggregation in the host. Cleaves adenosine triphosphate (ATP) and adenosine diphosphate (ADP) to adenosine monophosphate (AMP) and inorganic phosphate. May reduce probing time by facilitating the speed of locating blood. This Aedes albopictus (Asian tiger mosquito) protein is Apyrase.